The primary structure comprises 226 residues: ATP-dependent dethiobiotin synthetase BioD (226 aa).

Mg(2+) is bound at residue Thr-19. The active site involves Lys-40. Asp-53 and Glu-114 together coordinate Mg(2+). ATP is bound by residues Asp-53, 114–117, and 174–175; these read EGAG and NR.

The protein belongs to the dethiobiotin synthetase family. In terms of assembly, homodimer. Requires Mg(2+) as cofactor.

The protein resides in the cytoplasm. It carries out the reaction (7R,8S)-7,8-diammoniononanoate + CO2 + ATP = (4R,5S)-dethiobiotin + ADP + phosphate + 3 H(+). Its pathway is cofactor biosynthesis; biotin biosynthesis; biotin from 7,8-diaminononanoate: step 1/2. In terms of biological role, catalyzes a mechanistically unusual reaction, the ATP-dependent insertion of CO2 between the N7 and N8 nitrogen atoms of 7,8-diaminopelargonic acid (DAPA, also called 7,8-diammoniononanoate) to form a ureido ring. The chain is ATP-dependent dethiobiotin synthetase BioD from Nitrosospira multiformis (strain ATCC 25196 / NCIMB 11849 / C 71).